Reading from the N-terminus, the 131-residue chain is Histone H2B.2 (131 aa).

A compositionally biased stretch (basic and acidic residues) spans 1 to 20 (MAPPKAEKKPASKAPAEKKP). The tract at residues 1 to 39 (MAPPKAEKKPASKAPAEKKPAAKKTASSTDAKKRTKTRK) is disordered. N6-acetyllysine; alternate occurs at positions 8 and 9. Glycyl lysine isopeptide (Lys-Gly) (interchain with G-Cter in SUMO); alternate cross-links involve residues Lys-8 and Lys-9. A Phosphoserine modification is found at Ser-12. Position 13 is an N6-acetyllysine (Lys-13). Lys-18 carries the N6-acetyllysine; alternate modification. Lys-18 is covalently cross-linked (Glycyl lysine isopeptide (Lys-Gly) (interchain with G-Cter in SUMO); alternate). Residue Lys-19 forms a Glycyl lysine isopeptide (Lys-Gly) (interchain with G-Cter in SUMO) linkage. Lys-125 is covalently cross-linked (Glycyl lysine isopeptide (Lys-Gly) (interchain with G-Cter in ubiquitin)).

This sequence belongs to the histone H2B family. In terms of assembly, the nucleosome is a histone octamer containing two molecules each of H2A, H2B, H3 and H4 assembled in one H3-H4 heterotetramer and two H2A-H2B heterodimers. The octamer wraps approximately 147 bp of DNA. Monoubiquitinated to form H2BK123ub1. H2BK123ub1 gives a specific tag for epigenetic transcriptional activation and is also prerequisite for H3K4me and H3K79me formation. H2BK123ub1 also modulates the formation of double-strand breaks during meiosis and is a prerequisite for DNA-damage checkpoint activation. In terms of processing, phosphorylated by STE20 to form H2BS10ph during progression through meiotic prophase. May be correlated with chromosome condensation. Post-translationally, acetylated by GCN5 to form H2BK11ac and H2BK16ac. H2BK16ac can also be formed by ESA1. Acetylation of N-terminal lysines and particularly formation of H2BK11acK16ac has a positive effect on transcription. Sumoylation to form H2BK6su or H2BK7su, and probably also H2BK16su or H2BK17su, occurs preferentially near the telomeres and represses gene transcription.

It is found in the nucleus. It localises to the chromosome. Its function is as follows. Core component of nucleosome. Nucleosomes wrap and compact DNA into chromatin, limiting DNA accessibility to the cellular machineries which require DNA as a template. Histones thereby play a central role in transcription regulation, DNA repair, DNA replication and chromosomal stability. DNA accessibility is regulated via a complex set of post-translational modifications of histones, also called histone code, and nucleosome remodeling. The protein is Histone H2B.2 (HTB2) of Scheffersomyces stipitis (strain ATCC 58785 / CBS 6054 / NBRC 10063 / NRRL Y-11545) (Yeast).